A 397-amino-acid polypeptide reads, in one-letter code: E3 ubiquitin-protein ligase RNF149 (397 aa).

The first 20 residues, 1 to 20 (MLRWLCLYSALCALTHGSSA), serve as a signal peptide directing secretion. Positions 39 to 49 (TNSSVTGSTES) are enriched in polar residues. The segment at 39-60 (TNSSVTGSTESGRYGDSSPKES) is disordered. N-linked (GlcNAc...) asparagine glycans are attached at residues N40 and N140. The PA domain maps to 83–170 (YIVPGTSAAA…PKGMEIMEPL (88 aa)). The chain crosses the membrane as a helical span at residues 196–216 (VVFVAIAFITMMIISLAWLIF). N231 is a glycosylation site (N-linked (GlcNAc...) asparagine). The segment at 264-305 (CAVCIENYKTKDLVRILPCKHIFHRLCIDPWLIEHRTCPMCK) adopts an RING-type; atypical zinc-finger fold. A disordered region spans residues 341–397 (SITQEESRSEGNNLPSSSTGSSLQQSNSVKDDAGETTALLDDPGNDNAAATHTQDSH). A compositionally biased stretch (low complexity) spans 351–368 (GNNLPSSSTGSSLQQSNS). Polar residues predominate over residues 388–397 (AAATHTQDSH).

It localises to the membrane. It catalyses the reaction S-ubiquitinyl-[E2 ubiquitin-conjugating enzyme]-L-cysteine + [acceptor protein]-L-lysine = [E2 ubiquitin-conjugating enzyme]-L-cysteine + N(6)-ubiquitinyl-[acceptor protein]-L-lysine.. Its pathway is protein modification; protein ubiquitination. Functionally, E3 ubiquitin-protein ligase. Ubiquitinates BRAF, inducing its proteasomal degradation. The polypeptide is E3 ubiquitin-protein ligase RNF149 (rnf149) (Xenopus laevis (African clawed frog)).